We begin with the raw amino-acid sequence, 190 residues long: Protein GrpE (190 aa).

The segment at 1–42 (MNEKDNQTTSEPENEQEIIDVNDSGEQPEENETEQPQEEAVE) is disordered. Positions 26 to 42 (EQPEENETEQPQEEAVE) are enriched in acidic residues.

It belongs to the GrpE family. Homodimer.

It localises to the cytoplasm. In terms of biological role, participates actively in the response to hyperosmotic and heat shock by preventing the aggregation of stress-denatured proteins, in association with DnaK and GrpE. It is the nucleotide exchange factor for DnaK and may function as a thermosensor. Unfolded proteins bind initially to DnaJ; upon interaction with the DnaJ-bound protein, DnaK hydrolyzes its bound ATP, resulting in the formation of a stable complex. GrpE releases ADP from DnaK; ATP binding to DnaK triggers the release of the substrate protein, thus completing the reaction cycle. Several rounds of ATP-dependent interactions between DnaJ, DnaK and GrpE are required for fully efficient folding. The protein is Protein GrpE of Oceanobacillus iheyensis (strain DSM 14371 / CIP 107618 / JCM 11309 / KCTC 3954 / HTE831).